Here is a 64-residue protein sequence, read N- to C-terminus: DNA gyrase inhibitor YacG (64 aa).

Residues C9, C12, C28, and C32 each coordinate Zn(2+). Residues 45–64 (KRIPSSGDLSESDDWSEEQK) form a disordered region. The segment covering 54–64 (SESDDWSEEQK) has biased composition (acidic residues).

The protein belongs to the DNA gyrase inhibitor YacG family. In terms of assembly, interacts with GyrB. Zn(2+) is required as a cofactor.

In terms of biological role, inhibits all the catalytic activities of DNA gyrase by preventing its interaction with DNA. Acts by binding directly to the C-terminal domain of GyrB, which probably disrupts DNA binding by the gyrase. The polypeptide is DNA gyrase inhibitor YacG (Citrobacter koseri (strain ATCC BAA-895 / CDC 4225-83 / SGSC4696)).